Consider the following 486-residue polypeptide: MVDERTPLKAVTTREDAPTAVMRPKPVGKSIFALSILGTLSAASISLFSMYGQTLQHKLGFTQVQVNSVSISSLLGMYLLMPVIGYLGDTYGSNYLALFSWITFPASYSIASGIFSTAADWHRETGEALPRAAPEMALCFFFIGASTSCMYYASLKASAHSMSVYFAEDGKLQTYTPGYAIWGPVAAFGLSSLWQSQLLRAVFITGKNVNVAGIFLFFAGLYAVICGIIFFSCRTAESMASELRKKAEASTDCNCDGPGHEGATLKEFFTDKTAWLFLLCFVFIGGPFEMFQNNMGAILDTVTVENADSPSFSTHVSLFATFSTVSRLVVGFSSEAMESHVSRPVLLSVIALVAACIHLMVPSGIFTVFDNAKYFSVVTIVNGFSYGSSFTLVPTIVTKVWGIANLGTIWGSFILALAVGSLGYGLLFAKVYDAASEVGVGSMSQVCSGVHCYGLTFVITGTGLAFAAAAVFFIWVFMWKKRGIHM.

A run of 12 helical transmembrane segments spans residues 31-51, 68-88, 95-115, 135-155, 174-194, 211-231, 268-288, 312-333, 349-369, 377-397, 409-429, and 457-477; these read IFAL…FSMY, SVSI…GYLG, YLAL…SGIF, EMAL…YASL, TYTP…SSLW, VAGI…IIFF, FFTD…GGPF, FSTH…VGFS, VIAL…FTVF, VVTI…PTIV, IWGS…LLFA, and FVIT…IWVF.

Belongs to the major facilitator superfamily.

The protein resides in the vacuole membrane. Probable transporter. This is Probable transporter MCH1 (MCH1) from Yarrowia lipolytica (strain CLIB 122 / E 150) (Yeast).